Here is a 232-residue protein sequence, read N- to C-terminus: MAKLSKRAAAIAQKIDRTKLYPVGEALNLVKETATAKFDESIDVAVQLGIDPKKSDQLVRGSVVLPAGTGKTVRVAVFAQGEKADAARAAGADIVGLDDLAEQIKAGQMDFDVVIASPDTMRVVGALGQVLGPRGLMPNPKVGTVTPDVATAVKNAKAGQIQYRTDKAGIIHATIGRASFGVEQLQNNLAALVDALQKARPAAAKGIYLRKLAVSSTMGGGARVEIASLSAN.

This sequence belongs to the universal ribosomal protein uL1 family. Part of the 50S ribosomal subunit.

Binds directly to 23S rRNA. The L1 stalk is quite mobile in the ribosome, and is involved in E site tRNA release. In terms of biological role, protein L1 is also a translational repressor protein, it controls the translation of the L11 operon by binding to its mRNA. The chain is Large ribosomal subunit protein uL1 from Bordetella bronchiseptica (strain ATCC BAA-588 / NCTC 13252 / RB50) (Alcaligenes bronchisepticus).